Reading from the N-terminus, the 689-residue chain is Choline transporter-like 1 (689 aa).

The chain crosses the membrane as a helical span at residues Ile-23–Ser-43. Asn-134 is a glycosylation site (N-linked (GlcNAc...) asparagine). 2 helical membrane-spanning segments follow: residues Phe-199–Phe-219 and Ile-233–Trp-255. A glycan (N-linked (GlcNAc...) asparagine) is linked at Asn-279. The next 2 helical transmembrane spans lie at Ile-283–Tyr-303 and Val-333–Leu-353. Asn-375 and Asn-389 each carry an N-linked (GlcNAc...) asparagine glycan. A run of 4 helical transmembrane segments spans residues Ile-412 to Ile-432, Leu-461 to Leu-481, Leu-562 to Met-582, and Phe-591 to Leu-611.

Belongs to the CTL (choline transporter-like) family.

It is found in the membrane. This Aedes aegypti (Yellowfever mosquito) protein is Choline transporter-like 1.